The chain runs to 162 residues: Small ribosomal subunit protein uS9 (162 aa).

It belongs to the universal ribosomal protein uS9 family.

The protein is Small ribosomal subunit protein uS9 of Methylobacterium sp. (strain 4-46).